A 321-amino-acid chain; its full sequence is Probable proline iminopeptidase (321 aa).

Residues 35-296 form the AB hydrolase-1 domain; it reads KPVVFLHGGP…IVVPDAGHSM (262 aa). Residue Ser-110 is the Nucleophile of the active site. Asp-266 is an active-site residue. Residue His-294 is the Proton donor of the active site.

Belongs to the peptidase S33 family.

Its subcellular location is the cytoplasm. It carries out the reaction Release of N-terminal proline from a peptide.. Functionally, specifically catalyzes the removal of N-terminal proline residues from peptides. The sequence is that of Probable proline iminopeptidase (pip) from Leptolyngbya boryana (Plectonema boryanum).